We begin with the raw amino-acid sequence, 449 residues long: Bifunctional protein GlmU (449 aa).

Residues 1–225 are pyrophosphorylase; the sequence is MLSVAILAAG…NGELQGINNR (225 aa). UDP-N-acetyl-alpha-D-glucosamine contacts are provided by residues 7 to 10, K21, Q73, and 78 to 79; these read LAAG and GT. D103 contacts Mg(2+). Residues G140, E154, N169, and N223 each coordinate UDP-N-acetyl-alpha-D-glucosamine. Residue N223 coordinates Mg(2+). A linker region spans residues 226-246; it reads IHLSECEECIQNSIKEKHMLN. Positions 247 to 449 are N-acetyltransferase; the sequence is GVTFINKASC…NIENWKKKKS (203 aa). Residues R328 and K346 each coordinate UDP-N-acetyl-alpha-D-glucosamine. H358 functions as the Proton acceptor in the catalytic mechanism. UDP-N-acetyl-alpha-D-glucosamine-binding residues include Y361 and N372. A375, A418, and R435 together coordinate acetyl-CoA.

This sequence in the N-terminal section; belongs to the N-acetylglucosamine-1-phosphate uridyltransferase family. In the C-terminal section; belongs to the transferase hexapeptide repeat family. In terms of assembly, homotrimer. Mg(2+) serves as cofactor.

Its subcellular location is the cytoplasm. It catalyses the reaction alpha-D-glucosamine 1-phosphate + acetyl-CoA = N-acetyl-alpha-D-glucosamine 1-phosphate + CoA + H(+). It carries out the reaction N-acetyl-alpha-D-glucosamine 1-phosphate + UTP + H(+) = UDP-N-acetyl-alpha-D-glucosamine + diphosphate. Its pathway is nucleotide-sugar biosynthesis; UDP-N-acetyl-alpha-D-glucosamine biosynthesis; N-acetyl-alpha-D-glucosamine 1-phosphate from alpha-D-glucosamine 6-phosphate (route II): step 2/2. The protein operates within nucleotide-sugar biosynthesis; UDP-N-acetyl-alpha-D-glucosamine biosynthesis; UDP-N-acetyl-alpha-D-glucosamine from N-acetyl-alpha-D-glucosamine 1-phosphate: step 1/1. It functions in the pathway bacterial outer membrane biogenesis; LPS lipid A biosynthesis. Its function is as follows. Catalyzes the last two sequential reactions in the de novo biosynthetic pathway for UDP-N-acetylglucosamine (UDP-GlcNAc). The C-terminal domain catalyzes the transfer of acetyl group from acetyl coenzyme A to glucosamine-1-phosphate (GlcN-1-P) to produce N-acetylglucosamine-1-phosphate (GlcNAc-1-P), which is converted into UDP-GlcNAc by the transfer of uridine 5-monophosphate (from uridine 5-triphosphate), a reaction catalyzed by the N-terminal domain. In Prochlorococcus marinus (strain AS9601), this protein is Bifunctional protein GlmU.